The chain runs to 529 residues: Kunitz-type protease inhibitor 1 (529 aa).

An N-terminal signal peptide occupies residues 1 to 35; that stretch reads MAPARTMARARLAPAGIPAVALWLLCTLGLQGTQA. In terms of domain architecture, MANSC spans 57-140; the sequence is GVPGFVLDTN…FAPREGFINY (84 aa). Residues N66 and N235 are each glycosylated (N-linked (GlcNAc...) asparagine). The region spanning 250-300 is the BPTI/Kunitz inhibitor 1 domain; it reads CLASNKVGRCRGSFPRWYYDPTEQICKSFVYGGCLGNKNNYLREEECILAC. Cystine bridges form between C250–C300, C259–C283, C275–C296, C335–C347, C342–C360, C354–C369, C391–C441, C400–C424, and C416–C437. An LDL-receptor class A domain is found at 334–370; it reads TCQPTQFRCSNGCCIDSFLECDDTPNCPDASDEAACE. Residues 391-441 enclose the BPTI/Kunitz inhibitor 2 domain; that stretch reads CVDLPDTGLCKESIPRWYYNPFSEHCARFTYGGCYGNKNNFEEEQQCLESC. N523 carries an N-linked (GlcNAc...) asparagine glycan.

In terms of assembly, interacts with HGFAC. Interacts with TMPRSS13; the interaction promotes the phosphorylation and cell membrane localization of TMPRSS13.

The protein resides in the secreted. It localises to the cytoplasm. The protein localises to the cell membrane. Functionally, inhibitor of HGFAC. Inhibits serine protease activity of ST14/matriptase in vitro. Inhibits serine protease activity of TMPRSS13, via the BPTI/Kunitz inhibitor 1 domain. The protein is Kunitz-type protease inhibitor 1 (SPINT1) of Homo sapiens (Human).